The chain runs to 901 residues: Protein translocase subunit SecA (901 aa).

Residues glutamine 87, 105–109, and aspartate 512 contribute to the ATP site; that span reads GEGKT. The interval 859–901 is disordered; that stretch reads HQDDDSAAAAALAAQTGERKVGRNDPCPCGSGKKYKQCHGRLQ. Zn(2+)-binding residues include cysteine 885, cysteine 887, cysteine 896, and histidine 897. The span at 891–901 shows a compositional bias: basic residues; sequence KKYKQCHGRLQ.

It belongs to the SecA family. In terms of assembly, monomer and homodimer. Part of the essential Sec protein translocation apparatus which comprises SecA, SecYEG and auxiliary proteins SecDF-YajC and YidC. Requires Zn(2+) as cofactor.

The protein resides in the cell inner membrane. Its subcellular location is the cytoplasm. It carries out the reaction ATP + H2O + cellular proteinSide 1 = ADP + phosphate + cellular proteinSide 2.. Functionally, part of the Sec protein translocase complex. Interacts with the SecYEG preprotein conducting channel. Has a central role in coupling the hydrolysis of ATP to the transfer of proteins into and across the cell membrane, serving both as a receptor for the preprotein-SecB complex and as an ATP-driven molecular motor driving the stepwise translocation of polypeptide chains across the membrane. In Escherichia coli O139:H28 (strain E24377A / ETEC), this protein is Protein translocase subunit SecA.